A 162-amino-acid chain; its full sequence is Transcription elongation factor GreA (162 aa).

Positions 46 to 77 form a coiled coil; that stretch reads RENAEYKAAREEQTRLNNMVTRLQEEIERAQV.

This sequence belongs to the GreA/GreB family.

In terms of biological role, necessary for efficient RNA polymerase transcription elongation past template-encoded arresting sites. The arresting sites in DNA have the property of trapping a certain fraction of elongating RNA polymerases that pass through, resulting in locked ternary complexes. Cleavage of the nascent transcript by cleavage factors such as GreA or GreB allows the resumption of elongation from the new 3'terminus. GreA releases sequences of 2 to 3 nucleotides. This is Transcription elongation factor GreA from Treponema pallidum (strain Nichols).